Consider the following 350-residue polypeptide: Phenylalanine--tRNA ligase alpha subunit (350 aa).

Glutamate 257 contributes to the Mg(2+) binding site.

Belongs to the class-II aminoacyl-tRNA synthetase family. Phe-tRNA synthetase alpha subunit type 1 subfamily. As to quaternary structure, tetramer of two alpha and two beta subunits. Mg(2+) is required as a cofactor.

The protein resides in the cytoplasm. The catalysed reaction is tRNA(Phe) + L-phenylalanine + ATP = L-phenylalanyl-tRNA(Phe) + AMP + diphosphate + H(+). This is Phenylalanine--tRNA ligase alpha subunit from Listeria monocytogenes serovar 1/2a (strain ATCC BAA-679 / EGD-e).